A 256-amino-acid polypeptide reads, in one-letter code: MAVGKNKRLSKGKKGLKKKAVDPFARKEWFDIKAPSTFENRNVGKTLINKSTGLKNAADGLKGRVFEVCLADLQGSEDHSYRKVKLRVDEVQGKNLLTNFHGLDFTSDKLRSLVRKWQSLVEANVTVKTADDYVLRVFAIAFTKRQANQVKKTTYAQSSKLREVRKKMIEIMQREVSNVTLAQLTSKLIPEVIGREIEKSTQSILPLQNIHIRKVKLLKQPKFDLGSLLALHGEGSTEEKGKKVSSGFKDVVLETV.

Residue Ala-2 is modified to N-acetylalanine; partial.

This sequence belongs to the eukaryotic ribosomal protein eS1 family. As to quaternary structure, component of the small ribosomal subunit. Mature ribosomes consist of a small (40S) and a large (60S) subunit. The 40S subunit contains about 33 different proteins and 1 molecule of RNA (18S). The 60S subunit contains about 49 different proteins and 3 molecules of RNA (25S, 5.8S and 5S).

It is found in the cytoplasm. In Clavispora lusitaniae (strain ATCC 42720) (Yeast), this protein is Small ribosomal subunit protein eS1A.